The sequence spans 257 residues: Thiazole synthase (257 aa).

The active-site Schiff-base intermediate with DXP is K97. 1-deoxy-D-xylulose 5-phosphate is bound by residues G158, 184 to 185 (AG), and 206 to 207 (NT).

Belongs to the ThiG family. Homotetramer. Forms heterodimers with either ThiH or ThiS.

It localises to the cytoplasm. The catalysed reaction is [ThiS sulfur-carrier protein]-C-terminal-Gly-aminoethanethioate + 2-iminoacetate + 1-deoxy-D-xylulose 5-phosphate = [ThiS sulfur-carrier protein]-C-terminal Gly-Gly + 2-[(2R,5Z)-2-carboxy-4-methylthiazol-5(2H)-ylidene]ethyl phosphate + 2 H2O + H(+). Its pathway is cofactor biosynthesis; thiamine diphosphate biosynthesis. Catalyzes the rearrangement of 1-deoxy-D-xylulose 5-phosphate (DXP) to produce the thiazole phosphate moiety of thiamine. Sulfur is provided by the thiocarboxylate moiety of the carrier protein ThiS. In vitro, sulfur can be provided by H(2)S. In Desulforamulus reducens (strain ATCC BAA-1160 / DSM 100696 / MI-1) (Desulfotomaculum reducens), this protein is Thiazole synthase.